We begin with the raw amino-acid sequence, 67 residues long: DNA-directed RNA polymerase subunit omega (67 aa).

It belongs to the RNA polymerase subunit omega family. The RNAP catalytic core consists of 2 alpha, 1 beta, 1 beta' and 1 omega subunit. When a sigma factor is associated with the core the holoenzyme is formed, which can initiate transcription.

It carries out the reaction RNA(n) + a ribonucleoside 5'-triphosphate = RNA(n+1) + diphosphate. In terms of biological role, promotes RNA polymerase assembly. Latches the N- and C-terminal regions of the beta' subunit thereby facilitating its interaction with the beta and alpha subunits. The chain is DNA-directed RNA polymerase subunit omega from Bacillus velezensis (strain DSM 23117 / BGSC 10A6 / LMG 26770 / FZB42) (Bacillus amyloliquefaciens subsp. plantarum).